Reading from the N-terminus, the 280-residue chain is Shikimate dehydrogenase (NADP(+)) (280 aa).

Residues 18–20 and Thr-65 contribute to the shikimate site; that span reads SRS. Lys-69 (proton acceptor) is an active-site residue. 2 residues coordinate shikimate: Asn-90 and Asp-105. NADP(+) is bound by residues 131–135, 154–159, and Ile-219; these read GAGGA and NRTRAR. Residue Tyr-221 coordinates shikimate. Gly-242 serves as a coordination point for NADP(+).

It belongs to the shikimate dehydrogenase family. As to quaternary structure, homodimer.

The enzyme catalyses shikimate + NADP(+) = 3-dehydroshikimate + NADPH + H(+). The protein operates within metabolic intermediate biosynthesis; chorismate biosynthesis; chorismate from D-erythrose 4-phosphate and phosphoenolpyruvate: step 4/7. Its function is as follows. Involved in the biosynthesis of the chorismate, which leads to the biosynthesis of aromatic amino acids. Catalyzes the reversible NADPH linked reduction of 3-dehydroshikimate (DHSA) to yield shikimate (SA). This is Shikimate dehydrogenase (NADP(+)) from Methylocella silvestris (strain DSM 15510 / CIP 108128 / LMG 27833 / NCIMB 13906 / BL2).